Reading from the N-terminus, the 257-residue chain is 5-oxoprolinase subunit A (257 aa).

The protein belongs to the LamB/PxpA family. In terms of assembly, forms a complex composed of PxpA, PxpB and PxpC.

It carries out the reaction 5-oxo-L-proline + ATP + 2 H2O = L-glutamate + ADP + phosphate + H(+). Its function is as follows. Catalyzes the cleavage of 5-oxoproline to form L-glutamate coupled to the hydrolysis of ATP to ADP and inorganic phosphate. The protein is 5-oxoprolinase subunit A of Oceanobacillus iheyensis (strain DSM 14371 / CIP 107618 / JCM 11309 / KCTC 3954 / HTE831).